The chain runs to 633 residues: Extracellular metalloproteinase 3 (633 aa).

Positions 1-18 are cleaved as a signal peptide; that stretch reads MHGLLLAGLLALPMNVLA. Positions 19 to 246 are excised as a propeptide; the sequence is HPAEHHASNV…VHNVVDYVAS (228 aa). N232 and N410 each carry an N-linked (GlcNAc...) asparagine glycan. Position 429 (H429) interacts with Zn(2+). Residue E430 is part of the active site. Zn(2+) is bound at residue H433. N-linked (GlcNAc...) asparagine glycans are attached at residues N480 and N622.

This sequence belongs to the peptidase M36 family. The cofactor is Zn(2+).

It is found in the secreted. In terms of biological role, secreted metalloproteinase that allows assimilation of proteinaceous substrates and probably acts as a virulence factor. The sequence is that of Extracellular metalloproteinase 3 (MEP3) from Arthroderma gypseum (strain ATCC MYA-4604 / CBS 118893) (Microsporum gypseum).